The sequence spans 435 residues: Tryptophan synthase beta chain (435 aa).

Residue Lys-92 is modified to N6-(pyridoxal phosphate)lysine.

The protein belongs to the TrpB family. Tetramer of two alpha and two beta chains. The cofactor is pyridoxal 5'-phosphate.

The catalysed reaction is (1S,2R)-1-C-(indol-3-yl)glycerol 3-phosphate + L-serine = D-glyceraldehyde 3-phosphate + L-tryptophan + H2O. It participates in amino-acid biosynthesis; L-tryptophan biosynthesis; L-tryptophan from chorismate: step 5/5. Its function is as follows. The beta subunit is responsible for the synthesis of L-tryptophan from indole and L-serine. This chain is Tryptophan synthase beta chain, found in Albidiferax ferrireducens (strain ATCC BAA-621 / DSM 15236 / T118) (Rhodoferax ferrireducens).